A 292-amino-acid polypeptide reads, in one-letter code: MAEKQQAVTEFYNNTSPRGAWEFLLGDHLHEGFYDPGTTATISGSQAAAARMIDEALRFANIYDDPSKKPKNMLDIGCGVGGTCVHVAKQYGIQCKGITLSPEEVKCAQGIAKAQGLEEKVSFDVGDALNLPYKDGTFDLVLTIECIEHVQDKEKFIREMIRVAAPGAPIVILSYAHRNLSPSAESLKPDEKKVLKKICDNLALSCLCSSADFVRWLTQLPAEDIKTADWTQNTSPFFPLLMKETFTWKGFTSLLMKGGWTAIKELLALRMMSKAADDGLLKFVAITCRKSK.

The tract at residues 71 to 80 is SAM motif I; that stretch reads KNMLDIGCGV. The tract at residues 134–142 is SAM motif II; the sequence is KDGTFDLVL. Positions 135–141 match the Vacuolar targeting signal motif; that stretch reads DGTFDLV. Positions 161–170 are SAM motif III; the sequence is IRVAAPGAPI.

The protein belongs to the class I-like SAM-binding methyltransferase superfamily. gTMT family. Homodimer. In terms of tissue distribution, mainly expressed in mature roots and, to a lesser extent, in leaves, stems and flowers.

The protein resides in the vacuole membrane. It carries out the reaction norajmaline + S-adenosyl-L-methionine = ajmaline + S-adenosyl-L-homocysteine + H(+). The enzyme catalyses 4-methylnorajmaline + S-adenosyl-L-methionine = 4-methylajmaline + S-adenosyl-L-homocysteine + H(+). It participates in alkaloid biosynthesis; ajmaline biosynthesis. Its function is as follows. N-methyltransferase involved in the biosynthesis of ajmaline-type monoterpenoid indole alkaloids (MIAs) natural products, important plant-derived pharmaceuticals used in the therapy of heart disorders. Catalyzes the indole N-methylation of norajmaline to produce ajmaline. Also able, with a lower efficiency, to mediates the conversion of 4-methylnorajmaline to 4-methylajmaline. The chain is Norajmaline N-methyltransferase from Rauvolfia serpentina (Serpentine wood).